The chain runs to 500 residues: Signal transduction histidine-protein kinase/phosphatase UhpB (500 aa).

The next 8 membrane-spanning stretches (helical) occupy residues 8-28, 78-98, 112-132, 140-160, 185-205, 207-224, 231-249, and 253-273; these read LITV…LWSI, VALA…LPVA, LLLQ…PWLG, ALLL…VFWH, HLIW…GLPA, LSRF…ALAW, ALIA…QTWH, and VDLL…GAGI. Residues 274–500 lie on the Cytoplasmic side of the membrane; sequence QRLRELNQSL…VSVSLPQRYV (227 aa). One can recognise a Histidine kinase domain in the interval 311 to 499; sequence ELHDDIGQTI…RVSVSLPQRY (189 aa). Residue His313 is modified to Phosphohistidine; by autocatalysis.

In terms of processing, autophosphorylated.

The protein resides in the cell inner membrane. The catalysed reaction is ATP + protein L-histidine = ADP + protein N-phospho-L-histidine.. Functionally, part of the UhpABC signaling cascade that controls the expression of the hexose phosphate transporter UhpT. UhpB functions as a membrane-associated protein kinase that autophosphorylates in response to interaction with UhpC, and subsequently transfers its phosphate group to the response regulator UhpA. Can also dephosphorylate UhpA. The sequence is that of Signal transduction histidine-protein kinase/phosphatase UhpB (uhpB) from Salmonella typhimurium (strain LT2 / SGSC1412 / ATCC 700720).